The primary structure comprises 61 residues: Large ribosomal subunit protein uL30 (61 aa).

It belongs to the universal ribosomal protein uL30 family. As to quaternary structure, part of the 50S ribosomal subunit.

This is Large ribosomal subunit protein uL30 from Saccharophagus degradans (strain 2-40 / ATCC 43961 / DSM 17024).